The following is a 97-amino-acid chain: Putative pterin-4-alpha-carbinolamine dehydratase (97 aa).

This sequence belongs to the pterin-4-alpha-carbinolamine dehydratase family.

The catalysed reaction is (4aS,6R)-4a-hydroxy-L-erythro-5,6,7,8-tetrahydrobiopterin = (6R)-L-erythro-6,7-dihydrobiopterin + H2O. This is Putative pterin-4-alpha-carbinolamine dehydratase from Rhizorhabdus wittichii (strain DSM 6014 / CCUG 31198 / JCM 15750 / NBRC 105917 / EY 4224 / RW1) (Sphingomonas wittichii).